Here is a 326-residue protein sequence, read N- to C-terminus: uncharacterized protein (326 aa).

Solcar repeat units follow at residues 20 to 107 (QDSN…CKKK), 120 to 219 (LTNT…LREF), and 231 to 322 (KSNL…VCDS). The next 6 helical transmembrane spans lie at 24–40 (IAFL…RTVV), 84–104 (GLNC…YEAC), 126–143 (LFSG…TYPL), 195–213 (VWPT…FAVY), 237–254 (LTIG…TYPF), and 297–316 (GLAA…WLVY).

This sequence belongs to the mitochondrial carrier (TC 2.A.29) family.

It is found in the mitochondrion inner membrane. This is an uncharacterized protein from Saccharomyces cerevisiae (strain ATCC 204508 / S288c) (Baker's yeast).